Consider the following 449-residue polypeptide: Probable glycine dehydrogenase (decarboxylating) subunit 1 (449 aa).

The protein belongs to the GcvP family. N-terminal subunit subfamily. As to quaternary structure, the glycine cleavage system is composed of four proteins: P, T, L and H. In this organism, the P 'protein' is a heterodimer of two subunits.

It catalyses the reaction N(6)-[(R)-lipoyl]-L-lysyl-[glycine-cleavage complex H protein] + glycine + H(+) = N(6)-[(R)-S(8)-aminomethyldihydrolipoyl]-L-lysyl-[glycine-cleavage complex H protein] + CO2. Its function is as follows. The glycine cleavage system catalyzes the degradation of glycine. The P protein binds the alpha-amino group of glycine through its pyridoxal phosphate cofactor; CO(2) is released and the remaining methylamine moiety is then transferred to the lipoamide cofactor of the H protein. This is Probable glycine dehydrogenase (decarboxylating) subunit 1 from Oceanobacillus iheyensis (strain DSM 14371 / CIP 107618 / JCM 11309 / KCTC 3954 / HTE831).